The primary structure comprises 152 residues: Putative superoxide dismutase [Cu-Zn] (152 aa).

His-43, His-45, and His-60 together coordinate Cu cation. A disulfide bridge links Cys-54 with Cys-144. Residues His-60, His-68, His-77, and Asp-80 each coordinate Zn(2+). His-118 lines the Cu cation pocket.

This sequence belongs to the Cu-Zn superoxide dismutase family. Requires Cu cation as cofactor. It depends on Zn(2+) as a cofactor.

The enzyme catalyses 2 superoxide + 2 H(+) = H2O2 + O2. In terms of biological role, destroys radicals which are normally produced within the cells and which are toxic to biological systems. This chain is Putative superoxide dismutase [Cu-Zn] (SOD), found in Orgyia pseudotsugata (Douglas-fir tussock moth).